Reading from the N-terminus, the 416-residue chain is D-amino acid dehydrogenase (416 aa).

3-17 (VVILGAGVIGVTSAW) lines the FAD pocket.

Belongs to the DadA oxidoreductase family. The cofactor is FAD.

It catalyses the reaction a D-alpha-amino acid + A + H2O = a 2-oxocarboxylate + AH2 + NH4(+). Its pathway is amino-acid degradation; D-alanine degradation; NH(3) and pyruvate from D-alanine: step 1/1. Its function is as follows. Oxidative deamination of D-amino acids. The chain is D-amino acid dehydrogenase from Rhizorhabdus wittichii (strain DSM 6014 / CCUG 31198 / JCM 15750 / NBRC 105917 / EY 4224 / RW1) (Sphingomonas wittichii).